The chain runs to 328 residues: Ribosomal RNA small subunit methyltransferase H (328 aa).

S-adenosyl-L-methionine is bound by residues 37 to 39, aspartate 57, phenylalanine 83, aspartate 104, and glutamine 111; that span reads GGH.

The protein belongs to the methyltransferase superfamily. RsmH family.

It localises to the cytoplasm. The enzyme catalyses cytidine(1402) in 16S rRNA + S-adenosyl-L-methionine = N(4)-methylcytidine(1402) in 16S rRNA + S-adenosyl-L-homocysteine + H(+). In terms of biological role, specifically methylates the N4 position of cytidine in position 1402 (C1402) of 16S rRNA. The polypeptide is Ribosomal RNA small subunit methyltransferase H (Neisseria meningitidis serogroup A / serotype 4A (strain DSM 15465 / Z2491)).